Consider the following 202-residue polypeptide: Ras-related protein Rab-24 (202 aa).

A GTP-binding site is contributed by 14–21 (GYASVGKT). The short motif at 35–43 (THTTIGGAF) is the Effector region element. Residues 61-65 (DTAGT) and 118-121 (TKLD) each bind GTP. 2 S-geranylgeranyl cysteine lipidation sites follow: C201 and C202.

It belongs to the small GTPase superfamily. Rab family.

The protein resides in the endoplasmic reticulum-Golgi intermediate compartment. The protein localises to the endosome. It is found in the endoplasmic reticulum. It localises to the golgi apparatus. Its subcellular location is the membrane. Functionally, may be involved in autophagy-related processes. In Dictyostelium discoideum (Social amoeba), this protein is Ras-related protein Rab-24 (rab24).